Consider the following 361-residue polypeptide: P2Y purinoceptor 4 (361 aa).

The Extracellular portion of the chain corresponds to 1–30; it reads MTSADSLLFTSLGPSPSSGDGDCKFNEEFK. Residues 31-58 traverse the membrane as a helical segment; it reads FILLPLSYAVVFVLGLALNAPTLWLFLF. Residues 59–68 are Cytoplasmic-facing; that stretch reads RLRPWDATAT. The chain crosses the membrane as a helical span at residues 69–91; it reads YMFHLALSDTLYVLSLPTLVYYY. The Extracellular segment spans residues 92–108; the sequence is AARNHWPFGTGFCKFVR. Cys104 and Cys181 form a disulfide bridge. A helical membrane pass occupies residues 109–127; it reads FLFYWNLYCSVLFLTCISV. Over 128–149 the chain is Cytoplasmic; sequence HRYMGICHPLRAIRWGRPRFAG. The helical transmembrane segment at 150–170 threads the bilayer; that stretch reads LLCLGVWLVVAGCLVPNLFFV. Over 171 to 192 the chain is Extracellular; the sequence is TTNANGTTILCHDTTLPEEFDH. Asn175 carries an N-linked (GlcNAc...) asparagine glycan. A helical transmembrane segment spans residues 193–218; the sequence is YVYFSSTIMVLLFGFPFLITLVCYGL. Topologically, residues 219 to 242 are cytoplasmic; it reads MARRLYRPLPGAGQSSSRLRSLRT. The helical transmembrane segment at 243 to 265 threads the bilayer; sequence IAVVLTVFAVCFVPFHITRTIYY. Residues 266–283 lie on the Extracellular side of the membrane; that stretch reads LARLLNAECRVLNIVNVV. A helical transmembrane segment spans residues 284-305; sequence YKVTRPLASANSCLDPVLYLFT. The Cytoplasmic segment spans residues 306 to 361; sequence GDKYRNQLQQLCRGSTPKRRTTASSLALVTLHEESISRWADIHQDSIFPAYEGDRL.

It belongs to the G-protein coupled receptor 1 family. Phosphorylation of Ser-329 and Ser-330 is a key step in agonist-dependent desensitization and loss of surface P2RY4. This phosphorylation does not involve PKC, nor other calcium-activated kinases. In terms of tissue distribution, expressed in the liver, intestine, stomach, bladder and lung.

Its subcellular location is the cell membrane. In terms of biological role, receptor for ATP and UTP coupled to G-proteins that activate a phosphatidylinositol-calcium second messenger system. In Mus musculus (Mouse), this protein is P2Y purinoceptor 4 (P2ry4).